The sequence spans 217 residues: uncharacterized protein (217 aa).

The signal sequence occupies residues 1-32 (MPITKATPLFLRYRLKGFVFLTLLLVQGVFTA). C33 carries N-palmitoyl cysteine lipidation. Residue C33 is the site of S-diacylglycerol cysteine attachment.

It belongs to the MG067/MG068/MG395 family.

The protein resides in the cell membrane. This is an uncharacterized protein from Mycoplasma pneumoniae (strain ATCC 29342 / M129 / Subtype 1) (Mycoplasmoides pneumoniae).